Reading from the N-terminus, the 329-residue chain is Probable endo-beta-1,4-glucanase B (329 aa).

Positions 1-18 are cleaved as a signal peptide; that stretch reads MKFGSIVLIAAAAGSAVA. N-linked (GlcNAc...) asparagine glycans are attached at residues asparagine 33 and asparagine 96. Residue glutamate 156 is the Proton donor of the active site. Glutamate 263 acts as the Nucleophile in catalysis.

Belongs to the glycosyl hydrolase 5 (cellulase A) family.

The protein resides in the secreted. It carries out the reaction Endohydrolysis of (1-&gt;4)-beta-D-glucosidic linkages in cellulose, lichenin and cereal beta-D-glucans.. In terms of biological role, has endoglucanase activity on substrates containing beta-1,4 glycosidic bonds, like in carboxymethylcellulose (CMC), hydroxyethylcellulose (HEC) and beta-glucan. Involved in the degradation of complex natural cellulosic substrates. This chain is Probable endo-beta-1,4-glucanase B (eglB), found in Neosartorya fischeri (strain ATCC 1020 / DSM 3700 / CBS 544.65 / FGSC A1164 / JCM 1740 / NRRL 181 / WB 181) (Aspergillus fischerianus).